Here is a 314-residue protein sequence, read N- to C-terminus: Citrate/oxoglutarate carrier protein (314 aa).

3 Solcar repeats span residues 18–100 (VSFS…EAEY), 107–199 (LNNF…VEDG), and 217–301 (EKIG…AKEF). 5 consecutive transmembrane segments (helical) span residues 23–44 (ILLG…LEVV), 77–97 (IPWA…VSAE), 111–127 (ASGI…QAYL), 178–198 (VAIR…LVED), and 218–238 (KIGA…IEVI). A DNA-binding region spans residues 246–259 (KEDPNRPKNLTVGK). A helical membrane pass occupies residues 273–294 (LYRGVTPRIGLGIWQTVFMVGF).

This sequence belongs to the mitochondrial carrier (TC 2.A.29) family.

It localises to the mitochondrion inner membrane. Its subcellular location is the mitochondrion matrix. The protein localises to the mitochondrion nucleoid. Its activity is regulated as follows. Strongly inhibited by mersalyl, p-chloromercuribenzenesulfonate, mercuric chloride, N-ethylmaleimide, pyridoxal 5'-phosphate, bathophenanthroline, and tannic acid. Partially inhibited by alpha-cyanocinnamate and bromescol purple. Weakly inhibited by butylmalonate and phenylsuccinate. Not inhibited by 1,2,3-benzenetricarboxylate or carboxyatractyloside. Its function is as follows. Mitochondrial antiporter which catalyzes the transport of citrate and oxoglutarate across the membrane. Also shows specificity for oxaloacetate, and to a lesser extent succinate and fumarate. Transports isocitrate, cis-aconitate and L-malate with very low efficiency. Does not show uniporter activity. Helps to maintain normal citrate levels and NADPH/NADP(+) ratios under conditions of oxidative stress. In addition, associates with the mitochondrial nucleoid and binds DNA in vitro, although the relevance of these data in vivo is unclear. The chain is Citrate/oxoglutarate carrier protein (YHM2) from Saccharomyces cerevisiae (strain ATCC 204508 / S288c) (Baker's yeast).